Here is a 172-residue protein sequence, read N- to C-terminus: Envelope protein UL45 (172 aa).

The Intravirion portion of the chain corresponds to 1 to 27 (MPLRASEHAYRPLGPGTPPMRARLPAA). A helical; Signal-anchor for type II membrane protein transmembrane segment spans residues 28–48 (AWVGVGTIIGGVVIIAALVLV). The Virion surface portion of the chain corresponds to 49–172 (PSRASWALSP…TSTRNALGLP (124 aa)).

It belongs to the herpesviridae HHV-1 UL45 family.

The protein resides in the virion membrane. In terms of biological role, important virulence factor of HSV neurotropism. Seems to be required for glycoprotein B-induced fusion. Dispensable for growth in vitro. This is Envelope protein UL45 from Human herpesvirus 1 (strain 17) (HHV-1).